The chain runs to 394 residues: MLTQEHINIIKSTIPLLESAGPALTQHFYQRMFSHNPELKHIFNMTHQKTGRQSVALFEAIAAYAKHIDNLAALTSAVERIAHKHTSFNIQPEHYQIVGHHLLETLRELAPDAFTQPVEEAWTAAYFFLAQVFIDREGALYLERKQALGGWRDGRTFVVREKQVESAYVTSFVLVPADGGAVLDYQPGQYIGIEVTPEGSDYREIRQYSLSHASNGREYRISVKREGVGSDNPGLVSHYLHNNVKVGDSVKLYAPAGDFFYVERERPVVLISAGVGATPMQAILHTLAKQNKSGVTYLYACNSAKEHTFAQETAQLIAQQGWMQQVWYRDESADDVLQGEMQLAELILPIEDGDFYLCGPIGFMQYVVKQLLALGVDKARIHYEVFGPHAQLAA.

A Globin domain is found at 1-138 (MLTQEHINII…LAQVFIDREG (138 aa)). Heme b is bound at residue H85. Residues Y95 and E137 each act as charge relay system in the active site. Positions 149–394 (GGWRDGRTFV…VFGPHAQLAA (246 aa)) are reductase. Residues 152 to 262 (RDGRTFVVRE…YAPAGDFFYV (111 aa)) form the FAD-binding FR-type domain. Residues Y190 and 206–209 (RQYS) contribute to the FAD site. 274–279 (GVGATP) is an NADP(+) binding site. Residue 385–388 (VFGP) participates in FAD binding.

Belongs to the globin family. Two-domain flavohemoproteins subfamily. The protein in the C-terminal section; belongs to the flavoprotein pyridine nucleotide cytochrome reductase family. Heme b is required as a cofactor. It depends on FAD as a cofactor.

It carries out the reaction 2 nitric oxide + NADPH + 2 O2 = 2 nitrate + NADP(+) + H(+). The catalysed reaction is 2 nitric oxide + NADH + 2 O2 = 2 nitrate + NAD(+) + H(+). Is involved in NO detoxification in an aerobic process, termed nitric oxide dioxygenase (NOD) reaction that utilizes O(2) and NAD(P)H to convert NO to nitrate, which protects the bacterium from various noxious nitrogen compounds. Therefore, plays a central role in the inducible response to nitrosative stress. The protein is Flavohemoprotein (hmp) of Vibrio cholerae serotype O1 (strain ATCC 39315 / El Tor Inaba N16961).